Here is a 465-residue protein sequence, read N- to C-terminus: Protein hedgehog (465 aa).

Residue cysteine 79 is the site of N-palmitoyl cysteine attachment. Positions 143, 144, 149, 179, 180, 183, and 185 each coordinate Ca(2+). Residue glycine 251 is the site of Cholesterol glycine ester attachment.

This sequence belongs to the hedgehog family. In terms of assembly, interacts with shf. The C-terminal part of the hedgehog protein precursor displays an autoproteolysis activity that results in the cleavage of the full-length protein into two parts (N-product and C-product). In addition, the C-terminal part displays a cholesterol transferase activity that results by the covalent attachment of a cholesterol moiety to the C-terminal of the newly generated N-product. The N-product is the active species in both local and long-range signaling, whereas the C-product has no signaling activity. In terms of processing, cholesterylation is required for N-product targeting to lipid rafts and multimerization. Post-translationally, N-palmitoylation by Rasp of the hedgehog N-product, within the secretory pathway, is required for the embryonic and larval patterning activities of the hedgehog signal.

The protein localises to the nucleus. It is found in the cytoplasm. It localises to the cell membrane. It catalyses the reaction glycyl-L-cysteinyl-[protein] + cholesterol + H(+) = [protein]-C-terminal glycyl cholesterol ester + N-terminal L-cysteinyl-[protein]. Its function is as follows. The C-terminal part of the hedgehog protein precursor displays an autoproteolysis activity that results in the cleavage of the full-length protein into two parts (N-product and C-product). In addition, the C-terminal part displays a cholesterol transferase activity that results by the covalent attachment of a cholesterol moiety to the C-terminal of the newly generated N-product. Once cleaved, the C-product has no signaling activity and diffuses from the cell. In terms of biological role, the dually lipidated hedgehog protein N-product is a morphogen which is essential for a variety of patterning events during development. Establishes the anterior-posterior axis of the embryonic segments and patterns the larval imaginal disks. Binds to the patched (ptc) receptor, which functions in association with smoothened (smo), to activate the transcription of target genes wingless (wg), decapentaplegic (dpp) and ptc. In the absence of hh, ptc represses the constitutive signaling activity of smo through fused (fu). Essential component of a signaling pathway which regulates the Duox-dependent gut immune response to bacterial uracil; required to activate Cad99C-dependent endosome formation, norpA-dependent Ca2+ mobilization and p38 MAPK, which are essential steps in the Duox-dependent production of reactive oxygen species (ROS) in response to intestinal bacterial infection. During photoreceptor differentiation, it up-regulates transcription of Ubr3, which in turn promotes the hh-signaling pathway by mediating the ubiquitination and degradation of cos. The protein is Protein hedgehog of Drosophila yakuba (Fruit fly).